Consider the following 337-residue polypeptide: DNA-directed RNA polymerase subunit alpha (337 aa).

An alpha N-terminal domain (alpha-NTD) region spans residues 1–231 (MRNITTSAYT…KQLSVFDKIT (231 aa)). The interval 248–337 (NTKLLQNITD…IAELKAQNEG (90 aa)) is alpha C-terminal domain (alpha-CTD).

This sequence belongs to the RNA polymerase alpha chain family. Homodimer. The RNAP catalytic core consists of 2 alpha, 1 beta, 1 beta' and 1 omega subunit. When a sigma factor is associated with the core the holoenzyme is formed, which can initiate transcription.

The enzyme catalyses RNA(n) + a ribonucleoside 5'-triphosphate = RNA(n+1) + diphosphate. DNA-dependent RNA polymerase catalyzes the transcription of DNA into RNA using the four ribonucleoside triphosphates as substrates. The sequence is that of DNA-directed RNA polymerase subunit alpha from Campylobacter jejuni subsp. jejuni serotype O:6 (strain 81116 / NCTC 11828).